We begin with the raw amino-acid sequence, 581 residues long: Protein alan shepard (581 aa).

The span at 1–10 shows a compositional bias: pro residues; the sequence is MHPRYSPAPP. The segment at 1–73 is disordered; sequence MHPRYSPAPP…AVTAAPPTPR (73 aa). Y5 is subject to Phosphotyrosine. The segment covering 35 to 54 has biased composition (polar residues); it reads ANNSQQLPPQMPRSQNYANG. Residues 55–68 are compositionally biased toward low complexity; the sequence is SSSSAAAASAVTAA. Phosphotyrosine occurs at positions 128 and 146. Residues 168 to 226 show a composition bias toward low complexity; that stretch reads PATTTYGQRVPTAASPSNTNSSSSSNTGSQSGTLSTSLSHTTNTNTNMGPNGTAQNQNQ. Positions 168-234 are disordered; that stretch reads PATTTYGQRV…NQQGGGGEQL (67 aa). RRM domains lie at 237 to 310 and 316 to 395; these read TNLY…MAKQ and TNLY…FADG. Residues 555 to 581 are disordered; that stretch reads MTDSEQASTAASPDEAYTQYPHQAAPK.

Has a role in the perception of gravity. The polypeptide is Protein alan shepard (Drosophila willistoni (Fruit fly)).